We begin with the raw amino-acid sequence, 125 residues long: Glycoprotein hormones alpha chain (125 aa).

The N-terminal stretch at 1-30 is a signal peptide; it reads MVSAVTTMGCMKAAGVSLLLLYFLLNAADS. 5 cysteine pairs are disulfide-bonded: cysteine 41/cysteine 64, cysteine 44/cysteine 93, cysteine 61/cysteine 114, cysteine 65/cysteine 116, and cysteine 92/cysteine 119. Residues asparagine 85 and asparagine 110 are each glycosylated (N-linked (GlcNAc...) asparagine).

Belongs to the glycoprotein hormones subunit alpha family. In terms of assembly, heterodimer. Glycoprotein hormones are heterodimers composed of a common alpha chain described here and a unique beta chain which confers their biological specificity to the different hormones.

It is found in the secreted. In terms of biological role, shared alpha chain of heterodimeric glycoprotein hormones. These hormones bind specific receptors on target cells that in turn activate downstream signaling pathways. Involved in gametogenesis and steroidogenesis. The chain is Glycoprotein hormones alpha chain (cga) from Fundulus heteroclitus (Killifish).